The primary structure comprises 844 residues: Proto-oncogene vav (844 aa).

The region spanning 1–119 (MELWRQCTHW…YTLSALSWTP (119 aa)) is the Calponin-homology (CH) domain. The DH domain occupies 193–372 (KRCCCLREIQ…RDLAQCVNEV (180 aa)). The region spanning 401 to 503 (RPKIDGELKI…WMEQFEMAIS (103 aa)) is the PH domain. A Phorbol-ester/DAG-type zinc finger spans residues 514 to 563 (GHDFQMFSFEETTSCKACQMLLRGTFYQGYRCQRCRAPAHKECLGRVPPC). The tract at residues 567–589 (GQDYSGTMKKDKPHRRAQDKKRN) is disordered. Residues 591–659 (LGLPKMEVCQ…PCNRVKPYVH (69 aa)) enclose the SH3 1 domain. The 95-residue stretch at 670–764 (WYAGPMERAG…SLDTTLQFPF (95 aa)) folds into the SH2 domain. An SH3 2 domain is found at 781–841 (KIFGTAKARY…PSNYVEEDYS (61 aa)). A phosphotyrosine mark is found at tyrosine 825 and tyrosine 843.

In terms of assembly, interacts with SHB. Interacts with APS, DOCK2, GRB2, GRB3, DOCK2, SLA, TEC and ZNF655/VIK. Interacts with SIAH2; without leading to its degradation. Associates with BLNK, PLCG1, GRB2 and NCK1 in a B-cell antigen receptor-dependent fashion. Interacts with CBLB; which inhibits tyrosine phosphorylation and down-regulates activity. May interact with CCPG1. Interacts with CLNK. Interacts with THEMIS2. Interacts with NEK3 and this interaction is prolactin-dependent. Interacts with ITK. Interacts with PTK2B/PYK2. Interacts with HCK. Interacts with PTK2B/PYK2. Interacts (via SH2 domain) with SYK. Interacts with ANKRD54. Interacts with CD6. Interacts with LCP2; this interaction plays a role in TCR-mediated cytokine production. Phosphorylated by FYN. Phosphorylated on tyrosine residues by HCK in response to IFNG and bacterial lipopolysaccharide (LPS).

In terms of biological role, couples tyrosine kinase signals with the activation of the Rho/Rac GTPases, thus leading to cell differentiation and/or proliferation. The protein is Proto-oncogene vav (VAV1) of Bos taurus (Bovine).